The chain runs to 610 residues: All-trans-retinol 13,14-reductase (610 aa).

The signal sequence occupies residues 1-18 (MWLPLVLFLAVLLLAVVC).

It belongs to the carotenoid/retinoid oxidoreductase family. CrtISO subfamily. NAD(+) serves as cofactor. NADP(+) is required as a cofactor. Requires FAD as cofactor.

The protein localises to the endoplasmic reticulum membrane. It carries out the reaction all-trans-13,14-dihydroretinol + A = all-trans-retinol + AH2. In terms of biological role, catalyzes the saturation of all-trans-retinol to all-trans-13,14-dihydroretinol. Does not exhibit any activity toward all-trans-retinoic acid, nor 9-cis, 11-cis or 13-cis-retinol isomers. May play a role in the metabolism of vitamin A. Independently of retinol conversion, may regulate liver metabolism upstream of MLXIPL/ChREBP. May play a role in adipocyte differentiation. The sequence is that of All-trans-retinol 13,14-reductase (RETSAT) from Macaca fascicularis (Crab-eating macaque).